The sequence spans 197 residues: MAKMMEPRFKLSRSLGVNIYGHPKAMQRAGKTAGRASKKLSSYGLQLLEKQKLRAYYGVLEKQFVIYVEKAMKASGLSGEALIQSLECRLDNMVYRMGFASSIREARQMVNHGHILVNGKKVDRPSYPIQVDDAVALRERSQKIEKYLSNLKNTTINFDYIETDVSSFTGRLLRIPNREEIPVEVNEQLVIEFYSKK.

The S4 RNA-binding domain maps to 88–153; that stretch reads CRLDNMVYRM…IEKYLSNLKN (66 aa).

The protein belongs to the universal ribosomal protein uS4 family. As to quaternary structure, part of the 30S ribosomal subunit. Contacts protein S5. The interaction surface between S4 and S5 is involved in control of translational fidelity.

One of the primary rRNA binding proteins, it binds directly to 16S rRNA where it nucleates assembly of the body of the 30S subunit. Functionally, with S5 and S12 plays an important role in translational accuracy. The sequence is that of Small ribosomal subunit protein uS4B from Alkaliphilus oremlandii (strain OhILAs) (Clostridium oremlandii (strain OhILAs)).